Reading from the N-terminus, the 624-residue chain is 1-deoxy-D-xylulose-5-phosphate synthase (624 aa).

Residues histidine 80 and 121-123 (GHS) each bind thiamine diphosphate. Aspartate 152 lines the Mg(2+) pocket. Residues 153-154 (GA), asparagine 181, tyrosine 288, and glutamate 370 each bind thiamine diphosphate. Asparagine 181 serves as a coordination point for Mg(2+).

Belongs to the transketolase family. DXPS subfamily. Homodimer. It depends on Mg(2+) as a cofactor. Requires thiamine diphosphate as cofactor.

The enzyme catalyses D-glyceraldehyde 3-phosphate + pyruvate + H(+) = 1-deoxy-D-xylulose 5-phosphate + CO2. It functions in the pathway metabolic intermediate biosynthesis; 1-deoxy-D-xylulose 5-phosphate biosynthesis; 1-deoxy-D-xylulose 5-phosphate from D-glyceraldehyde 3-phosphate and pyruvate: step 1/1. Its function is as follows. Catalyzes the acyloin condensation reaction between C atoms 2 and 3 of pyruvate and glyceraldehyde 3-phosphate to yield 1-deoxy-D-xylulose-5-phosphate (DXP). This Proteus mirabilis (strain HI4320) protein is 1-deoxy-D-xylulose-5-phosphate synthase.